We begin with the raw amino-acid sequence, 311 residues long: 33 kDa chaperonin (311 aa).

Disulfide bonds link cysteine 240–cysteine 242 and cysteine 273–cysteine 276.

Belongs to the HSP33 family. Post-translationally, under oxidizing conditions two disulfide bonds are formed involving the reactive cysteines. Under reducing conditions zinc is bound to the reactive cysteines and the protein is inactive.

The protein resides in the cytoplasm. Redox regulated molecular chaperone. Protects both thermally unfolding and oxidatively damaged proteins from irreversible aggregation. Plays an important role in the bacterial defense system toward oxidative stress. In Trichodesmium erythraeum (strain IMS101), this protein is 33 kDa chaperonin.